The following is a 228-amino-acid chain: 2,3-bisphosphoglycerate-dependent phosphoglycerate mutase (228 aa).

Substrate-binding positions include 8–15, 21–22, arginine 60, 87–90, lysine 98, 114–115, and 183–184; these read RHGQSEWN, TG, ERHY, RR, and GN. Histidine 9 acts as the Tele-phosphohistidine intermediate in catalysis. Glutamate 87 serves as the catalytic Proton donor/acceptor.

The protein belongs to the phosphoglycerate mutase family. BPG-dependent PGAM subfamily.

The enzyme catalyses (2R)-2-phosphoglycerate = (2R)-3-phosphoglycerate. The protein operates within carbohydrate degradation; glycolysis; pyruvate from D-glyceraldehyde 3-phosphate: step 3/5. Functionally, catalyzes the interconversion of 2-phosphoglycerate and 3-phosphoglycerate. The protein is 2,3-bisphosphoglycerate-dependent phosphoglycerate mutase of Staphylococcus haemolyticus (strain JCSC1435).